The chain runs to 361 residues: 4-oxalomesaconate tautomerase (361 aa).

This sequence belongs to the PrpF family.

It catalyses the reaction (1E)-4-oxobut-1-ene-1,2,4-tricarboxylate = 4-carboxy-2-hydroxy-cis,cis-muconate. Catalyzes the tautomerization of the 4-oxalomesaconic acid keto (OMAketo) generated by GalA dioxygenase to 4-oxalomesaconic acid enol (OMAenol). Mediates the second step in gallate degradation pathway. The chain is 4-oxalomesaconate tautomerase (galD) from Pseudomonas putida (strain ATCC 47054 / DSM 6125 / CFBP 8728 / NCIMB 11950 / KT2440).